We begin with the raw amino-acid sequence, 529 residues long: DEP domain-containing protein 1B (529 aa).

The 85-residue stretch at 24 to 108 (FRAKMPLRKH…DNRHLYRFPP (85 aa)) folds into the DEP domain. Phosphoserine is present on Ser-160. A Rho-GAP domain is found at 201–393 (DSLEEVLDVK…FLMDNYQEIL (193 aa)). Ser-436 is modified (phosphoserine).

The polypeptide is DEP domain-containing protein 1B (DEPDC1B) (Homo sapiens (Human)).